Reading from the N-terminus, the 445-residue chain is Phosphoglucosamine mutase (445 aa).

Ser102 (phosphoserine intermediate) is an active-site residue. Ser102, Asp241, Asp243, and Asp245 together coordinate Mg(2+). Phosphoserine is present on Ser102.

It belongs to the phosphohexose mutase family. Requires Mg(2+) as cofactor. Activated by phosphorylation.

It catalyses the reaction alpha-D-glucosamine 1-phosphate = D-glucosamine 6-phosphate. Catalyzes the conversion of glucosamine-6-phosphate to glucosamine-1-phosphate. The sequence is that of Phosphoglucosamine mutase from Haemophilus influenzae (strain PittEE).